The sequence spans 231 residues: Achaete-scute homolog 1 (231 aa).

2 disordered regions span residues 1 to 24 (MESS…FLPP) and 39 to 92 (AAAA…PELM). Low complexity predominate over residues 39 to 51 (AAAAAQSAQQQQP). Residues 76-85 (SAAKQVKRQR) are compositionally biased toward basic residues. The bHLH domain maps to 113 to 165 (AAVARRNERERNRVKLVNLGFATLREHVPNGAANKKMSKVETLRSAVEYIRAL). N6-acetyllysine is present on Lys151.

In terms of assembly, efficient DNA binding requires dimerization with another bHLH protein. Forms a heterodimer with TCF3. As to expression, developing CNS and PNS at embryonic and postnatal stages. Expressed in the epithelium of glandular stomach.

Its subcellular location is the nucleus. Functionally, transcription factor that plays a key role in neuronal differentiation: acts as a pioneer transcription factor, accessing closed chromatin to allow other factors to bind and activate neural pathways. Directly binds the E box motif (5'-CANNTG-3') on promoters and promotes transcription of neuronal genes. The combination of three transcription factors, ASCL1, POU3F2/BRN2 and MYT1L, is sufficient to reprogram fibroblasts and other somatic cells into induced neuronal (iN) cells in vitro. Plays a role at early stages of development of specific neural lineages in most regions of the CNS, and of several lineages in the PNS. Essential for the generation of olfactory and autonomic neurons. Acts synergistically with FOXN4 to specify the identity of V2b neurons rather than V2a from bipotential p2 progenitors during spinal cord neurogenesis, probably through DLL4-NOTCH signaling activation. Involved in the regulation of neuroendocrine cell development in the glandular stomach. The chain is Achaete-scute homolog 1 from Mus musculus (Mouse).